Here is a 289-residue protein sequence, read N- to C-terminus: Glucosamine-6-phosphate deaminase 1 (289 aa).

Lysine 64 is subject to N6-acetyllysine. Catalysis depends on aspartate 72, which acts as the Proton acceptor; for enolization step. The active-site For ring-opening step is the aspartate 141. Histidine 143 acts as the Proton acceptor; for ring-opening step in catalysis. The For ring-opening step role is filled by glutamate 148. Phosphothreonine is present on threonine 161.

This sequence belongs to the glucosamine/galactosamine-6-phosphate isomerase family. As to quaternary structure, homohexamer.

Its subcellular location is the cytoplasm. It carries out the reaction alpha-D-glucosamine 6-phosphate + H2O = beta-D-fructose 6-phosphate + NH4(+). The protein operates within nucleotide-sugar biosynthesis; UDP-N-acetyl-alpha-D-glucosamine biosynthesis; alpha-D-glucosamine 6-phosphate from D-fructose 6-phosphate: step 1/1. With respect to regulation, allosterically activated by N-acetylglucosamine-6-phosphate (GlcNAc6P). Catalyzes the reversible conversion of alpha-D-glucosamine 6-phosphate (GlcN-6P) into beta-D-fructose 6-phosphate (Fru-6P) and ammonium ion, a regulatory reaction step in de novo uridine diphosphate-N-acetyl-alpha-D-glucosamine (UDP-GlcNAc) biosynthesis via hexosamine pathway. Deamination is coupled to aldo-keto isomerization mediating the metabolic flux from UDP-GlcNAc toward Fru-6P. At high ammonium level can drive amination and isomerization of Fru-6P toward hexosamines and UDP-GlcNAc synthesis. Has a role in fine tuning the metabolic fluctuations of cytosolic UDP-GlcNAc and their effects on hyaluronan synthesis that occur during tissue remodeling. Seems to trigger calcium oscillations in mammalian eggs. These oscillations serve as the essential trigger for egg activation and early development of the embryo. The polypeptide is Glucosamine-6-phosphate deaminase 1 (Homo sapiens (Human)).